The following is a 147-amino-acid chain: MALKRINKELSDLARDPPAQCSAGPVGDDMFHWQATIMGPNDSPYQGGVFFLTIHFPTDYPFKPPKVAFTTRIYHPNINSNDSICLDILRSQWSPALTISKVLLSICSLLCDPNPDDPLVPEIARIYKTDRDKYNRISREWTQKYAM.

Positions 1 to 147 constitute a UBC core domain; that stretch reads MALKRINKEL…SREWTQKYAM (147 aa). Cysteine 21 and cysteine 107 are oxidised to a cystine. Cysteine 85 serves as the catalytic Glycyl thioester intermediate.

It belongs to the ubiquitin-conjugating enzyme family. In terms of assembly, interacts with SCF (SKP1-CUL1-F-box protein) E3 ubiquitin ligase complex; when Cullin is neddylated, the interaction between the E2 and the SCF complex is strengthened. Interacts with DAPK3. Interacts with BRCA1; the DNA damage checkpoint promotes the association with BRCA1 after ionizing radiation. Interacts non-covalently with ubiquitin. Interacts with E3 ubiquitin-protein ligase CBLC. Interacts with UBTD1. Interacts with RIGI and RNF135; involved in RIGI ubiquitination and activation. Phosphorylated by AURKB.

It is found in the cell membrane. The protein localises to the endosome membrane. The enzyme catalyses S-ubiquitinyl-[E1 ubiquitin-activating enzyme]-L-cysteine + [E2 ubiquitin-conjugating enzyme]-L-cysteine = [E1 ubiquitin-activating enzyme]-L-cysteine + S-ubiquitinyl-[E2 ubiquitin-conjugating enzyme]-L-cysteine.. The catalysed reaction is S-ubiquitinyl-[E1 ubiquitin-activating enzyme]-L-cysteine + [acceptor protein]-L-lysine = [E1 ubiquitin-activating enzyme]-L-cysteine + N(6)-monoubiquitinyl-[acceptor protein]-L-lysine.. Its pathway is protein modification; protein ubiquitination. Its function is as follows. Accepts ubiquitin from the E1 complex and catalyzes its covalent attachment to other proteins. In vitro catalyzes 'Lys-11'-, as well as 'Lys-48'-linked polyubiquitination. Cooperates with the E2 CDC34 and the SCF(FBXW11) E3 ligase complex for the polyubiquitination of NFKBIA leading to its subsequent proteasomal degradation. Acts as an initiator E2, priming the phosphorylated NFKBIA target at positions 'Lys-21' and/or 'Lys-22' with a monoubiquitin. Ubiquitin chain elongation is then performed by CDC34, building ubiquitin chains from the UBE2D3-primed NFKBIA-linked ubiquitin. Also acts as an initiator E2, in conjunction with RNF8, for the priming of PCNA. Monoubiquitination of PCNA, and its subsequent polyubiquitination, are essential events in the operation of the DNA damage tolerance (DDT) pathway that is activated after DNA damage caused by UV or chemical agents during S-phase. Associates with the BRCA1/BARD1 E3 ligase complex to perform ubiquitination at DNA damage sites following ionizing radiation leading to DNA repair. Targets DAPK3 for ubiquitination which influences promyelocytic leukemia protein nuclear body (PML-NB) formation in the nucleus. In conjunction with the MDM2 and TOPORS E3 ligases, functions ubiquitination of p53/TP53. In conjunction with the CBL E3 ligase, targets EGFR for polyubiquitination at the plasma membrane as well as during its internalization and transport on endosomes. In conjunction with the STUB1 E3 quality control E3 ligase, ubiquitinates unfolded proteins to catalyze their immediate destruction. Together with RNF135, catalyzes the viral RNA-dependent 'Lys-63'-linked polyubiquitination of RIGI to activate the downstream signaling pathway that leads to interferon beta production. Together with ZNF598, catalyzes ubiquitination of 40S ribosomal proteins in response to ribosome collisions. In cooperation with the GATOR2 complex, catalyzes 'Lys-6'-linked ubiquitination of NPRL2. This Bos taurus (Bovine) protein is Ubiquitin-conjugating enzyme E2 D3 (UBE2D3).